We begin with the raw amino-acid sequence, 228 residues long: Urease accessory protein UreF (228 aa).

Belongs to the UreF family. UreD, UreF and UreG form a complex that acts as a GTP-hydrolysis-dependent molecular chaperone, activating the urease apoprotein by helping to assemble the nickel containing metallocenter of UreC. The UreE protein probably delivers the nickel.

It is found in the cytoplasm. In terms of biological role, required for maturation of urease via the functional incorporation of the urease nickel metallocenter. The polypeptide is Urease accessory protein UreF (Dechloromonas aromatica (strain RCB)).